The chain runs to 821 residues: Centrosomal protein of 95 kDa (821 aa).

Disordered stretches follow at residues T310–K354, A390–H474, and K514–A550. Composition is skewed to basic and acidic residues over residues E325–N340 and A390–N410. Positions R427 to Y441 are enriched in basic residues. Phosphoserine is present on residues S445, S447, and S449. Coiled coils occupy residues L578–E627 and L695–A789.

Its subcellular location is the cytoplasm. The protein localises to the cytoskeleton. It is found in the microtubule organizing center. It localises to the centrosome. The protein resides in the spindle pole. This is Centrosomal protein of 95 kDa (Cep95) from Rattus norvegicus (Rat).